Here is a 152-residue protein sequence, read N- to C-terminus: Deoxyuridine 5'-triphosphate nucleotidohydrolase (152 aa).

Residues 71-73, Asn84, 88-90, and Met98 contribute to the substrate site; these read RSG and LID.

Belongs to the dUTPase family. Mg(2+) serves as cofactor.

The catalysed reaction is dUTP + H2O = dUMP + diphosphate + H(+). It functions in the pathway pyrimidine metabolism; dUMP biosynthesis; dUMP from dCTP (dUTP route): step 2/2. Functionally, this enzyme is involved in nucleotide metabolism: it produces dUMP, the immediate precursor of thymidine nucleotides and it decreases the intracellular concentration of dUTP so that uracil cannot be incorporated into DNA. This chain is Deoxyuridine 5'-triphosphate nucleotidohydrolase, found in Shewanella piezotolerans (strain WP3 / JCM 13877).